The chain runs to 92 residues: C-C motif chemokine 4 (92 aa).

The first 23 residues, 1–23, serve as a signal peptide directing secretion; sequence MKLCVSALSLLLLVAAFCAPGFS. 2 cysteine pairs are disulfide-bonded: cysteine 34–cysteine 58 and cysteine 35–cysteine 74.

The protein belongs to the intercrine beta (chemokine CC) family. As to quaternary structure, homodimer.

It localises to the secreted. Its function is as follows. Monokine with inflammatory and chemokinetic properties. In Mus musculus (Mouse), this protein is C-C motif chemokine 4 (Ccl4).